The chain runs to 203 residues: Holliday junction branch migration complex subunit RuvA (203 aa).

Residues 1-63 are domain I; it reads MIGQLSGKVD…EEHIHLYGFL (63 aa). The domain II stretch occupies residues 64–142; the sequence is NLEEKIFFNL…KISSGSAIIK (79 aa). A flexible linker region spans residues 143 to 149; that stretch reads ESLNIKH. The tract at residues 150–203 is domain III; that stretch reads ITPVASNEVIKALVNLGFSRFEAQNAVQGIITQNPEISIDELIKTALKNRNSNF.

This sequence belongs to the RuvA family. As to quaternary structure, homotetramer. Forms an RuvA(8)-RuvB(12)-Holliday junction (HJ) complex. HJ DNA is sandwiched between 2 RuvA tetramers; dsDNA enters through RuvA and exits via RuvB. An RuvB hexamer assembles on each DNA strand where it exits the tetramer. Each RuvB hexamer is contacted by two RuvA subunits (via domain III) on 2 adjacent RuvB subunits; this complex drives branch migration. In the full resolvosome a probable DNA-RuvA(4)-RuvB(12)-RuvC(2) complex forms which resolves the HJ.

Its subcellular location is the cytoplasm. Its function is as follows. The RuvA-RuvB-RuvC complex processes Holliday junction (HJ) DNA during genetic recombination and DNA repair, while the RuvA-RuvB complex plays an important role in the rescue of blocked DNA replication forks via replication fork reversal (RFR). RuvA specifically binds to HJ cruciform DNA, conferring on it an open structure. The RuvB hexamer acts as an ATP-dependent pump, pulling dsDNA into and through the RuvAB complex. HJ branch migration allows RuvC to scan DNA until it finds its consensus sequence, where it cleaves and resolves the cruciform DNA. In Rickettsia africae (strain ESF-5), this protein is Holliday junction branch migration complex subunit RuvA.